The chain runs to 583 residues: Ribosomal lysine N-methyltransferase 1 (583 aa).

The 253-residue stretch at Glu-22–Gly-274 folds into the SET domain. Tyr-273 is an S-adenosyl-L-methionine binding site. Coiled coils occupy residues Lys-378–Ser-407 and Lys-433–His-459.

The protein belongs to the class V-like SAM-binding methyltransferase superfamily. RKM1 family.

The protein localises to the cytoplasm. The protein resides in the nucleus. Its function is as follows. S-adenosyl-L-methionine-dependent protein-lysine N-methyltransferase that monomethylates ribosomal protein S18 (RPS18A and RPS18B) at 'Lys-48' and dimethylates ribosomal protein L23 (RPL23A and RPL23B) at 'Lys-106' and 'Lys-110'. This Saccharomyces cerevisiae (strain ATCC 204508 / S288c) (Baker's yeast) protein is Ribosomal lysine N-methyltransferase 1.